Consider the following 327-residue polypeptide: Golgi to ER traffic protein 4 homolog (327 aa).

Alanine 2 carries the post-translational modification N-acetylalanine. Serine 12 is modified (phosphoserine). The tract at residues 195-271 (FVAQAVLQFL…YQPSLRRDPM (77 aa)) is interacts with BAG6. The interval 307 to 327 (GSSEQEDGEESPSDGSPIELD) is disordered.

Belongs to the GET4 family. As to quaternary structure, component of the BAG6/BAT3 complex, at least composed of BAG6, UBL4A and GET4/TRC35. Interacts with BAG6; the interaction is direct and localizes BAG6 to the cytosol. Interacts with GET3. In terms of processing, ubiquitinated by RNF12, leading to proteasomal degradation. When unassembled from BAG6; ubiquitinylation is modulated by BAG6 quality control role and effectuated by RNF126.

Its subcellular location is the cytoplasm. It is found in the cytosol. Functionally, as part of a cytosolic protein quality control complex, the BAG6/BAT3 complex, maintains misfolded and hydrophobic patches-containing proteins in a soluble state and participates in their proper delivery to the endoplasmic reticulum or alternatively can promote their sorting to the proteasome where they undergo degradation. The BAG6/BAT3 complex is involved in the post-translational delivery of tail-anchored/type II transmembrane proteins to the endoplasmic reticulum membrane. Recruited to ribosomes, it interacts with the transmembrane region of newly synthesized tail-anchored proteins and together with SGTA and ASNA1 mediates their delivery to the endoplasmic reticulum. Client proteins that cannot be properly delivered to the endoplasmic reticulum are ubiquitinated and sorted to the proteasome. Similarly, the BAG6/BAT3 complex also functions as a sorting platform for proteins of the secretory pathway that are mislocalized to the cytosol either delivering them to the proteasome for degradation or to the endoplasmic reticulum. The BAG6/BAT3 complex also plays a role in the endoplasmic reticulum-associated degradation (ERAD), a quality control mechanism that eliminates unwanted proteins of the endoplasmic reticulum through their retrotranslocation to the cytosol and their targeting to the proteasome. It maintains these retrotranslocated proteins in an unfolded yet soluble state condition in the cytosol to ensure their proper delivery to the proteasome. The protein is Golgi to ER traffic protein 4 homolog of Homo sapiens (Human).